Consider the following 603-residue polypeptide: MNTFICSALICLSWLPGFIQARVLTKKLTITYAKGAPDGIERDMIFINGQFPGPDLIFDEGDDVVINVVNDMPFNTTVHWHGLLMQGTPWSDGVPGLTQKPIEPGESFVYRFKAEPAGTYWYHSHSRATLLDGLYGALWIRPKENVPMPFTMISNSSDDLSAMERAAKNPQLLIVSDWSNFTSWQYIQGLVASELDIFCVDSILLNGKGSSYCPGQRLLESELSAYMNYAFGGANITDKGCFPFVESTEGPYLPGNQSAIPDHMWKDCVLGNGSNETIYVDPEEKWVSLNIVMASTMKSVVFSIDEHDLWLYELDGQLIEPIKYQWVTMLPSKRYSVLVKLNKTPGDYTIRLPDQGFSQIISGFATFSYKGGQDIGQTTPWVTYGGQNASDQGNGSGLTDLLPAPFPALRPRNTSDVFFVYNLYRWNAAYTWSLTGAAAMPVDDWAYQPLLYNPNSTAAHDKSLVIRTKYGQWVDLILQVGSKPDERQEINHVIHKHSSRAWQVGSGSGIWNYTSVDEAATLHPELFNFENPPYMDVFATSFEGPSWLIMRYQVTNPGPWLLHCHSEIHLAGGMAGVIMDGVDRWPTIPPAYAPNATGHYPLV.

A signal peptide spans 1-21; sequence MNTFICSALICLSWLPGFIQA. The region spanning 30-144 is the Plastocyanin-like 1 domain; it reads ITYAKGAPDG…YGALWIRPKE (115 aa). Residue N75 is glycosylated (N-linked (GlcNAc...) asparagine). Cu cation is bound by residues H79, H81, H123, and H125. 10 N-linked (GlcNAc...) asparagine glycosylation sites follow: N155, N180, N235, N256, N272, N275, N388, N394, N413, and N455. In terms of domain architecture, Plastocyanin-like 2 spans 173-353; the sequence is LIVSDWSNFT…TPGDYTIRLP (181 aa). In terms of domain architecture, Plastocyanin-like 3 spans 450–581; sequence LLYNPNSTAA…GGMAGVIMDG (132 aa). H495 contributes to the Cu cation binding site. Residues N512 and N595 are each glycosylated (N-linked (GlcNAc...) asparagine).

The protein belongs to the multicopper oxidase family.

The catalysed reaction is 4 monapinone A + O2 = 2 dinapinone A + 2 H2O. The enzyme catalyses 4 monapinone E + O2 = 2 dinapinone E + 2 H2O. Its pathway is secondary metabolite biosynthesis. Multicopper oxidase; part of the gene cluster that mediates the biosynthesis of dinapinones DPA1 (or (M)-DPA) and DPA2 (or (P)-DPA), biaryl dihydronaphthopyranones that act in concert as inhibitors of triacylglycerol accumulation in mammalian cells. The first step in the pathway corresponds to the biosynthesis of dihydroxy-decanoyl-CoA by the fungal type I fatty acid synthase (formed by ORF4 and ORF5). The cluster-specific polyketide synthase (ORF7) then accepts and extends dihydroxy-decanoyl-CoA with 6 malonyl-CoA moieties and cyclizes the molecule to produce a putative polyhydroxynaphthopyranone intermediate, which is further methylated by the cluster-specific methyltransferase (ORF1) at 7-OH to produce monapinone A (MPA). MCE catalyzes the regioselective biaryl coupling of monapinone A (MPA) at the 8,8'-positions to afford dimeric atropisomers DPA1 and DPA2 in a ratio of approximately 1:2.5. Monapinone E (MPE) also appears to be a substrate for MCE and provides the atropisomers dinapinones DPE1 (or (M)-DPE) and DPE2 (or (P)-DPE). This Talaromyces pinophilus (Penicillium pinophilum) protein is Multicopper oxidase MCE.